The sequence spans 348 residues: Selenide, water dikinase (348 aa).

Cys-17 is a catalytic residue. Residues Lys-20 and 47–49 each bind ATP; that span reads RAD. Asp-50 is a binding site for Mg(2+). ATP is bound by residues Asp-67, Asp-90, and 138 to 140; that span reads GHT. A Mg(2+)-binding site is contributed by Asp-90. Asp-226 lines the Mg(2+) pocket.

The protein belongs to the selenophosphate synthase 1 family. Class I subfamily. In terms of assembly, homodimer. The cofactor is Mg(2+).

It catalyses the reaction hydrogenselenide + ATP + H2O = selenophosphate + AMP + phosphate + 2 H(+). Its function is as follows. Synthesizes selenophosphate from selenide and ATP. The protein is Selenide, water dikinase of Pelobacter propionicus (strain DSM 2379 / NBRC 103807 / OttBd1).